The chain runs to 164 residues: UPF0304 protein YE1336 (164 aa).

This sequence belongs to the UPF0304 family.

This Yersinia enterocolitica serotype O:8 / biotype 1B (strain NCTC 13174 / 8081) protein is UPF0304 protein YE1336.